Reading from the N-terminus, the 753-residue chain is MTILNHTLGFPRVGLRRELKKAQESYWAGNSTREELLTVGRELRARHWDQQKQAGIDLLPVGDFAWYDHVLTTSLLLGNVPPRHQNKDGSVDIDTLFRIGRGRAPTGEPAAAAEMTKWFNTNYHYMVPEFVKGQQFKLTWTQLLEEVDEALALGHNVKPVLLGPVTYLWLGKVKGEQFDRLSLLNDILPVYQQVLAELAKRGIEWVQIDEPALVLELPQAWLDAYKPAYDALQGQVKLLLTTYFEGVTPNLDTITALPVQGLHVDLVHGKDDVVELHKRLPSDWLLSAGLINGRNVWRADLTEKYAQIKDIVGKRDLWVASSCSLLHSPIDLSVETRLDAEVKSWFAFALQKCHELALLRDALNSGDTAALAEWSAPIQARRHSTRVHNPAVEKRLAAITAQDSQRANVYEVRAEAQRARFKLPAWPTTTIGSFPQTTEIRTLRLDFKKGNLDANNYRTGIAEHIKQAIVEQERLGLDVLVHGEAERNDMVEYFGEHLDGFVFTQNGWVQSYGSRCVKPPIVIGDISRPAPITVEWAKYAQSLTDKPVKGMLTGPVTILCWSFPREDVSRETIAKQIALALRDEVADLEAAGIGIIQIDEPALREGLPLRRSDWDAYLQWGVEAFRINAAVAKDDTQIHTHMCYCEFNDIMDSIAALDADVITIETSRSDMELLESFEEFDYPNEIGPGVYDIHSPNVPSVEWIEALLKKAAKRIPAERLWVNPDCGLKTRGWPETRAALANMVQAAQNLRRG.

Residues 17 to 20 (RELK) and K117 each bind 5-methyltetrahydropteroyltri-L-glutamate. Residues 431–433 (IGS) and E484 each bind L-homocysteine. L-methionine contacts are provided by residues 431-433 (IGS) and E484. Residues 515-516 (RC) and W561 contribute to the 5-methyltetrahydropteroyltri-L-glutamate site. D599 contributes to the L-homocysteine binding site. An L-methionine-binding site is contributed by D599. A 5-methyltetrahydropteroyltri-L-glutamate-binding site is contributed by E605. 3 residues coordinate Zn(2+): H641, C643, and E665. H694 (proton donor) is an active-site residue. Zn(2+) is bound at residue C726.

It belongs to the vitamin-B12 independent methionine synthase family. The cofactor is Zn(2+).

The catalysed reaction is 5-methyltetrahydropteroyltri-L-glutamate + L-homocysteine = tetrahydropteroyltri-L-glutamate + L-methionine. It participates in amino-acid biosynthesis; L-methionine biosynthesis via de novo pathway; L-methionine from L-homocysteine (MetE route): step 1/1. Functionally, catalyzes the transfer of a methyl group from 5-methyltetrahydrofolate to homocysteine resulting in methionine formation. In Escherichia coli O8 (strain IAI1), this protein is 5-methyltetrahydropteroyltriglutamate--homocysteine methyltransferase.